The chain runs to 211 residues: FMN-dependent NADH:quinone oxidoreductase (211 aa).

17-19 (SYS) contributes to the FMN binding site.

It belongs to the azoreductase type 1 family. Homodimer. FMN is required as a cofactor.

It catalyses the reaction 2 a quinone + NADH + H(+) = 2 a 1,4-benzosemiquinone + NAD(+). The catalysed reaction is N,N-dimethyl-1,4-phenylenediamine + anthranilate + 2 NAD(+) = 2-(4-dimethylaminophenyl)diazenylbenzoate + 2 NADH + 2 H(+). In terms of biological role, quinone reductase that provides resistance to thiol-specific stress caused by electrophilic quinones. Also exhibits azoreductase activity. Catalyzes the reductive cleavage of the azo bond in aromatic azo compounds to the corresponding amines. The chain is FMN-dependent NADH:quinone oxidoreductase from Bacillus pumilus (strain SAFR-032).